Here is a 151-residue protein sequence, read N- to C-terminus: 3-hydroxyacyl-[acyl-carrier-protein] dehydratase FabZ (151 aa).

The active site involves H49.

It belongs to the thioester dehydratase family. FabZ subfamily.

It localises to the cytoplasm. It carries out the reaction a (3R)-hydroxyacyl-[ACP] = a (2E)-enoyl-[ACP] + H2O. Its function is as follows. Involved in unsaturated fatty acids biosynthesis. Catalyzes the dehydration of short chain beta-hydroxyacyl-ACPs and long chain saturated and unsaturated beta-hydroxyacyl-ACPs. This is 3-hydroxyacyl-[acyl-carrier-protein] dehydratase FabZ from Wolinella succinogenes (strain ATCC 29543 / DSM 1740 / CCUG 13145 / JCM 31913 / LMG 7466 / NCTC 11488 / FDC 602W) (Vibrio succinogenes).